We begin with the raw amino-acid sequence, 646 residues long: Stage V sporulation protein D (646 aa).

Catalysis depends on Ser294, which acts as the Acyl-ester intermediate. A PASTA domain is found at Asp580 to Glu638.

This sequence belongs to the transpeptidase family.

It is found in the cell membrane. It carries out the reaction Preferential cleavage: (Ac)2-L-Lys-D-Ala-|-D-Ala. Also transpeptidation of peptidyl-alanyl moieties that are N-acyl substituents of D-alanine.. Its pathway is cell wall biogenesis; peptidoglycan biosynthesis. In terms of biological role, penicillin-binding protein with an unknown catalytic activity. May have a specialized role in the morphogenesis of spore cortex, which is a modified form of peptidoglycan. Spore cortex formation is determined primarily by the mother cell. The sequence is that of Stage V sporulation protein D (spoVD) from Bacillus subtilis (strain 168).